A 1021-amino-acid chain; its full sequence is Multidrug resistance protein MdtC (1021 aa).

Residues 1-6 are Cytoplasmic-facing; the sequence is MKFFAL. Residues 7 to 29 form a helical membrane-spanning segment; the sequence is FIYRPVATILLSVAITLCGILGF. Residues 30–335 are Periplasmic-facing; that stretch reads RMLPVAPLPQ…TIRASLEEVE (306 aa). Residues 336–353 traverse the membrane as a helical segment; the sequence is QTLIISVALVILVVFLFL. At 354–359 the chain is on the cytoplasmic side; sequence RSGRAT. Residues 360 to 379 form a helical membrane-spanning segment; sequence IIPAVAVPVSLIGTFAAMYL. Residues 380 to 388 lie on the Periplasmic side of the membrane; that stretch reads CGFSLNNLS. A helical membrane pass occupies residues 389–411; sequence LMALTIATGFVVDDAIVVLENIA. At 412-430 the chain is on the cytoplasmic side; the sequence is RHLEAGMKPLQAALQGTRE. A helical transmembrane segment spans residues 431 to 453; it reads VGFTVLSMSLSLVAVFLPLLLMG. Topologically, residues 454 to 467 are periplasmic; it reads GLPGRLLREFAVTL. The helical transmembrane segment at 468 to 490 threads the bilayer; it reads SVAIGISLLVSLTLTPMMCGWML. The Cytoplasmic segment spans residues 491-848; the sequence is KASKPREQKR…QVFQETMNSQ (358 aa). A helical membrane pass occupies residues 849-871; sequence VILIIAAIATVYIVLGILYESYV. Topologically, residues 872–890 are periplasmic; it reads HPLTILSTLPSAGVGALLA. A helical transmembrane segment spans residues 891–913; the sequence is LELFNAPFSLIALIGIMLLIGIV. Residues 914–943 are Cytoplasmic-facing; sequence KKNAIMMVDFALEAQRHGNLTPQEAIFQAC. A helical membrane pass occupies residues 944-966; it reads LLRFRPIMMTTLAALFGALPLVL. Topologically, residues 967 to 980 are periplasmic; that stretch reads SGGDGSELRQPLEI. The helical transmembrane segment at 981–1003 threads the bilayer; the sequence is TIVGGLVMSQLLTLYTTPVVYLF. The Cytoplasmic portion of the chain corresponds to 1004-1021; that stretch reads FDRLRLRFSRKPKQTVTE.

The protein belongs to the resistance-nodulation-cell division (RND) (TC 2.A.6) family. MdtC subfamily. As to quaternary structure, part of a tripartite efflux system composed of MdtA, MdtB and MdtC. MdtC forms a heteromultimer with MdtB.

It is found in the cell inner membrane. The sequence is that of Multidrug resistance protein MdtC from Shigella flexneri.